Reading from the N-terminus, the 170-residue chain is Photosystem II extrinsic protein V (170 aa).

A signal peptide spans 1-33; that stretch reads MASVFSSLRRSLKGLLVLIPVLIGLAVTSPAQA. Heme c-binding residues include Cys70, Cys73, His74, and His125.

Belongs to the cytochrome c family. PsbV subfamily. PSII is composed of 1 copy each of membrane proteins PsbA, PsbB, PsbC, PsbD, PsbE, PsbF, PsbH, PsbI, PsbJ, PsbK, PsbL, PsbM, PsbT, PsbX, PsbY, PsbZ, Psb30/Ycf12, peripheral proteins PsbO, CyanoQ (PsbQ), PsbU, PsbV and a large number of cofactors. It forms dimeric complexes. It depends on heme c as a cofactor.

It is found in the cellular thylakoid membrane. In terms of biological role, one of the extrinsic, lumenal subunits of photosystem II (PSII). PSII is a light-driven water plastoquinone oxidoreductase, using light energy to abstract electrons from H(2)O, generating a proton gradient subsequently used for ATP formation. The extrinsic proteins stabilize the structure of photosystem II oxygen-evolving complex (OEC), the ion environment of oxygen evolution and protect the OEC against heat-induced inactivation. Low-potential cytochrome c that plays a role in the OEC of PSII. This chain is Photosystem II extrinsic protein V, found in Synechococcus sp. (strain CC9605).